The following is a 273-amino-acid chain: Putative phosphoenolpyruvate synthase regulatory protein (273 aa).

ADP is bound at residue 153 to 160; that stretch reads GVSRCGKT.

Belongs to the pyruvate, phosphate/water dikinase regulatory protein family. PSRP subfamily.

The catalysed reaction is [pyruvate, water dikinase] + ADP = [pyruvate, water dikinase]-phosphate + AMP + H(+). It carries out the reaction [pyruvate, water dikinase]-phosphate + phosphate + H(+) = [pyruvate, water dikinase] + diphosphate. Its function is as follows. Bifunctional serine/threonine kinase and phosphorylase involved in the regulation of the phosphoenolpyruvate synthase (PEPS) by catalyzing its phosphorylation/dephosphorylation. The polypeptide is Putative phosphoenolpyruvate synthase regulatory protein (Yersinia enterocolitica serotype O:8 / biotype 1B (strain NCTC 13174 / 8081)).